Consider the following 259-residue polypeptide: Oxaloacetate tautomerase FMP41, mitochondrial (259 aa).

Mg(2+) is bound by residues Glu87, Glu89, and Asp121.

It belongs to the FAH family. Mg(2+) is required as a cofactor. It depends on Mn(2+) as a cofactor.

The protein resides in the mitochondrion. It catalyses the reaction oxaloacetate = enol-oxaloacetate. In terms of biological role, tautomerase that converts enol-oxaloacetate, a strong inhibitor of succinate dehydrogenase, to the physiological keto form of oxaloacetate. This chain is Oxaloacetate tautomerase FMP41, mitochondrial, found in Saccharomyces cerevisiae (strain ATCC 204508 / S288c) (Baker's yeast).